The primary structure comprises 610 residues: Protein SAN1 (610 aa).

Positions methionine 1–arginine 10 are enriched in polar residues. Disordered regions lie at residues methionine 1 to alanine 36 and valine 176 to proline 231. Low complexity predominate over residues glycine 11 to alanine 36. Positions glutamate 194–glutamate 203 are enriched in basic and acidic residues. The span at threonine 210 to threonine 223 shows a compositional bias: polar residues. The RING-type zinc finger occupies asparagine 240–arginine 280. 5 disordered regions span residues threonine 318 to glycine 348, valine 360 to histidine 453, glycine 471 to glycine 502, glycine 514 to serine 554, and asparagine 569 to glutamine 610. Residues alanine 319–glycine 348 show a composition bias toward polar residues. Low complexity-rich tracts occupy residues asparagine 384–proline 406 and proline 425–serine 447. A compositionally biased stretch (polar residues) spans glycine 471–asparagine 492. Residues aspartate 493 to glycine 502 are compositionally biased toward low complexity. Polar residues-rich tracts occupy residues glutamine 533 to serine 554 and aspartate 592 to glutamine 610.

Plays a specific role in mating-type regulation of yeast, by acting post-translationally to control the stability or activity of the SIR4 proteins. The protein is Protein SAN1 (SAN1) of Saccharomyces cerevisiae (strain ATCC 204508 / S288c) (Baker's yeast).